The primary structure comprises 332 residues: HTH-type transcriptional regulator RegA (332 aa).

Positions 1-57 (MATSIKDVAREAGVSIATVSRVLNDIDVVNEDTKKKVLDAIKELGYRPNIVARSLKT) constitute an HTH lacI-type domain. Residues 5–24 (IKDVAREAGVSIATVSRVLN) constitute a DNA-binding region (H-T-H motif).

In terms of biological role, involved in the regulation of amylase production. This Clostridium saccharobutylicum protein is HTH-type transcriptional regulator RegA (regA).